Here is a 385-residue protein sequence, read N- to C-terminus: tRNA 2-selenouridine synthase (385 aa).

The Rhodanese domain maps to 15 to 138; that stretch reads FIADTPLIDV…ARQFLISTID (124 aa). Residue cysteine 98 is the S-selanylcysteine intermediate of the active site.

The protein belongs to the SelU family. Monomer.

The enzyme catalyses 5-methylaminomethyl-2-thiouridine(34) in tRNA + selenophosphate + (2E)-geranyl diphosphate + H2O + H(+) = 5-methylaminomethyl-2-selenouridine(34) in tRNA + (2E)-thiogeraniol + phosphate + diphosphate. It carries out the reaction 5-methylaminomethyl-2-thiouridine(34) in tRNA + (2E)-geranyl diphosphate = 5-methylaminomethyl-S-(2E)-geranyl-thiouridine(34) in tRNA + diphosphate. The catalysed reaction is 5-methylaminomethyl-S-(2E)-geranyl-thiouridine(34) in tRNA + selenophosphate + H(+) = 5-methylaminomethyl-2-(Se-phospho)selenouridine(34) in tRNA + (2E)-thiogeraniol. It catalyses the reaction 5-methylaminomethyl-2-(Se-phospho)selenouridine(34) in tRNA + H2O = 5-methylaminomethyl-2-selenouridine(34) in tRNA + phosphate. Involved in the post-transcriptional modification of the uridine at the wobble position (U34) of tRNA(Lys), tRNA(Glu) and tRNA(Gln). Catalyzes the conversion of 2-thiouridine (S2U-RNA) to 2-selenouridine (Se2U-RNA). Acts in a two-step process involving geranylation of 2-thiouridine (S2U) to S-geranyl-2-thiouridine (geS2U) and subsequent selenation of the latter derivative to 2-selenouridine (Se2U) in the tRNA chain. This Nitrosomonas europaea (strain ATCC 19718 / CIP 103999 / KCTC 2705 / NBRC 14298) protein is tRNA 2-selenouridine synthase.